The following is a 471-amino-acid chain: Reticulon-2 (471 aa).

Disordered stretches follow at residues 1 to 137, 153 to 181, and 205 to 234; these read MGQV…ERPL, SAGS…ASEA, and QLSP…DDEP. Low complexity predominate over residues 14-25; sequence APSTASSTPDST. The segment covering 32–43 has biased composition (basic and acidic residues); it reads SDFRELHTAREF. Phosphoserine is present on Ser-44. 2 stretches are compositionally biased toward polar residues: residues 100-118 and 159-168; these read PQQS…LSQS and DSATSSSTPL. Over residues 169–181 the composition is skewed to acidic residues; it reads ENEEPDGLEASEA. The span at 205–229 shows a compositional bias: polar residues; sequence QLSPSSGTPQAHTPSPQRSQDSNSG. A phosphoserine mark is found at Ser-226 and Ser-228. The 200-residue stretch at 272–471 folds into the Reticulon domain; it reads VADLLYWKDT…SVSGSKAKAE (200 aa). Helical transmembrane passes span 295 to 315 and 390 to 410; these read LLCL…LLGL and LLFY…LVIL.

In terms of assembly, interacts with SPAST. Interacts with BACE1. Interacts (via first transmembrane domain) with ARL6IP5/GTRAP3-18. Interacts (via N-terminus) with SLC1A1/EAAC1; the interaction promotes cell surface expression of SLC1A1. In terms of tissue distribution, detected in skeletal and cardiac muscle (at protein level). Expressed predominantly in neural and muscular tissues.

It is found in the endoplasmic reticulum membrane. The protein localises to the sarcoplasmic reticulum membrane. It localises to the cell membrane. Its subcellular location is the sarcolemma. The protein resides in the T-tubule. It is found in the cytoplasm. The protein localises to the myofibril. It localises to the sarcomere. Its subcellular location is the z line. The protein resides in the cytoskeleton. Inhibits amyloid precursor protein processing, probably by blocking BACE1 activity. Enhances trafficking of the glutamate transporter SLC1A1/EAAC1 from the endoplasmic reticulum to the cell surface. Plays a role in the translocation of SLC2A4/GLUT4 from intracellular membranes to the cell membrane which facilitates the uptake of glucose into the cell. This Mus musculus (Mouse) protein is Reticulon-2.